Here is a 345-residue protein sequence, read N- to C-terminus: Myb/SANT-like DNA-binding domain-containing protein 4 (345 aa).

The Myb-like domain occupies 4–77 (LKRKRKSNFS…EVKRRYLDWR (74 aa)). Lysine 9 is covalently cross-linked (Glycyl lysine isopeptide (Lys-Gly) (interchain with G-Cter in SUMO2)). Position 106 is a phosphoserine (serine 106). Residues lysine 114 and lysine 142 each participate in a glycyl lysine isopeptide (Lys-Gly) (interchain with G-Cter in SUMO2) cross-link. The segment at 141–175 (VKVEEEERDPQSPEFEIEEEEEMLSSVIPDSRREN) is disordered. At threonine 188 the chain carries Phosphothreonine. A coiled-coil region spans residues 202-344 (HLLMNIEKQK…RLRIQKEGHL (143 aa)). Glycyl lysine isopeptide (Lys-Gly) (interchain with G-Cter in SUMO2) cross-links involve residues lysine 237, lysine 254, and lysine 273.

This chain is Myb/SANT-like DNA-binding domain-containing protein 4 (Msantd4), found in Rattus norvegicus (Rat).